A 126-amino-acid polypeptide reads, in one-letter code: Protein Wnt-1 (126 aa).

Serine 1 carries O-palmitoleoyl serine; by PORCN lipidation. The cysteines at positions 92 and 107 are disulfide-linked. N-linked (GlcNAc...) asparagine glycosylation is found at asparagine 93 and asparagine 123.

Belongs to the Wnt family. In terms of processing, palmitoleoylation is required for efficient binding to frizzled receptors. Palmitoleoylation is necessary for proper trafficking to cell surface. Depalmitoleoylated by NOTUM, leading to inhibit Wnt signaling pathway.

The protein localises to the secreted. It localises to the extracellular space. It is found in the extracellular matrix. In terms of biological role, ligand for members of the frizzled family of seven transmembrane receptors. Acts in the canonical Wnt signaling pathway by promoting beta-catenin-dependent transcriptional activation. Plays an essential role in the development of the embryonic brain and central nervous system (CNS). Has a role in osteoblast function, bone development and bone homeostasis. In Pituophis melanoleucus (Pine snake), this protein is Protein Wnt-1 (WNT-1).